The following is a 545-amino-acid chain: T-complex protein 1 subunit gamma (545 aa).

Met1 carries the N-acetylmethionine modification. Positions 1 to 24 (MMGHRPVLVLSQNTKRESGRKVQS) are disordered. Ser11 carries the post-translational modification Phosphoserine. Lys15 participates in a covalent cross-link: Glycyl lysine isopeptide (Lys-Gly) (interchain with G-Cter in SUMO2). Gly42 lines the ADP pocket. Gly42 contributes to the ATP binding site. Asp93 is a Mg(2+) binding site. ADP-binding residues include Gly94, Thr95, Thr96, Ser97, Thr162, and Lys163. Residues Gly94, Thr95, and Thr96 each coordinate ATP. Ser170 carries the post-translational modification Phosphoserine. Residue Lys222 is modified to N6-acetyllysine. Phosphoserine occurs at positions 243 and 244. The residue at position 247 (Tyr247) is a Phosphotyrosine. Residues Lys248 and Lys249 each participate in a glycyl lysine isopeptide (Lys-Gly) (interchain with G-Cter in SUMO2) cross-link. Ser252 is subject to Phosphoserine. The cysteines at positions 366 and 372 are disulfide-linked. Lys381 participates in a covalent cross-link: Glycyl lysine isopeptide (Lys-Gly) (interchain with G-Cter in SUMO2). Residue Gly411 participates in ADP binding. Position 411 (Gly411) interacts with ATP. Phosphothreonine is present on residues Thr430 and Thr459. 4 residues coordinate ADP: Gly482, Glu483, Glu497, and Lys502. An ATP-binding site is contributed by Gly482. Glu497 provides a ligand contact to ATP. Residues 526–545 (HKKKGDDQSRQGGAPDAGQE) are disordered.

The protein belongs to the TCP-1 chaperonin family. As to quaternary structure, component of the chaperonin-containing T-complex (TRiC), a hexadecamer composed of two identical back-to-back stacked rings enclosing a protein folding chamber. Each ring is made up of eight different subunits: TCP1/CCT1, CCT2, CCT3, CCT4, CCT5, CCT6A/CCT6, CCT7, CCT8. Interacts with PACRG. Interacts with DNAAF4. Interacts with DLEC1.

The protein resides in the cytoplasm. It catalyses the reaction ATP + H2O = ADP + phosphate + H(+). Its function is as follows. Component of the chaperonin-containing T-complex (TRiC), a molecular chaperone complex that assists the folding of actin, tubulin and other proteins upon ATP hydrolysis. The TRiC complex mediates the folding of WRAP53/TCAB1, thereby regulating telomere maintenance. As part of the TRiC complex may play a role in the assembly of BBSome, a complex involved in ciliogenesis regulating transports vesicles to the cilia. The polypeptide is T-complex protein 1 subunit gamma (CCT3) (Bos taurus (Bovine)).